A 336-amino-acid chain; its full sequence is Ketol-acid reductoisomerase (NADP(+)) (336 aa).

One can recognise a KARI N-terminal Rossmann domain in the interval Met1–Thr182. NADP(+)-binding positions include Tyr25–Gln28, Arg48, Ser51, Ser53, and Asp83–Gln86. The active site involves His108. Residue Gly134 participates in NADP(+) binding. A KARI C-terminal knotted domain is found at Thr183–Leu328. Residues Asp191, Glu195, Glu227, and Glu231 each contribute to the Mg(2+) site. Residue Ser252 coordinates substrate.

Belongs to the ketol-acid reductoisomerase family. Mg(2+) is required as a cofactor.

The catalysed reaction is (2R)-2,3-dihydroxy-3-methylbutanoate + NADP(+) = (2S)-2-acetolactate + NADPH + H(+). It catalyses the reaction (2R,3R)-2,3-dihydroxy-3-methylpentanoate + NADP(+) = (S)-2-ethyl-2-hydroxy-3-oxobutanoate + NADPH + H(+). It participates in amino-acid biosynthesis; L-isoleucine biosynthesis; L-isoleucine from 2-oxobutanoate: step 2/4. Its pathway is amino-acid biosynthesis; L-valine biosynthesis; L-valine from pyruvate: step 2/4. Its function is as follows. Involved in the biosynthesis of branched-chain amino acids (BCAA). Catalyzes an alkyl-migration followed by a ketol-acid reduction of (S)-2-acetolactate (S2AL) to yield (R)-2,3-dihydroxy-isovalerate. In the isomerase reaction, S2AL is rearranged via a Mg-dependent methyl migration to produce 3-hydroxy-3-methyl-2-ketobutyrate (HMKB). In the reductase reaction, this 2-ketoacid undergoes a metal-dependent reduction by NADPH to yield (R)-2,3-dihydroxy-isovalerate. In Thermotoga maritima (strain ATCC 43589 / DSM 3109 / JCM 10099 / NBRC 100826 / MSB8), this protein is Ketol-acid reductoisomerase (NADP(+)).